Here is a 336-residue protein sequence, read N- to C-terminus: Dihydroorotate dehydrogenase (quinone) (336 aa).

FMN is bound by residues 62–66 (AGLDK) and Thr-86. Lys-66 is a substrate binding site. 111 to 115 (NRMGF) contacts substrate. Residues Asn-139 and Asn-172 each coordinate FMN. Asn-172 is a binding site for substrate. The active-site Nucleophile is Ser-175. Asn-177 serves as a coordination point for substrate. Positions 217 and 245 each coordinate FMN. Position 246–247 (246–247 (NT)) interacts with substrate. Residues Gly-268, Gly-297, and 318 to 319 (YS) contribute to the FMN site.

The protein belongs to the dihydroorotate dehydrogenase family. Type 2 subfamily. In terms of assembly, monomer. The cofactor is FMN.

Its subcellular location is the cell membrane. It catalyses the reaction (S)-dihydroorotate + a quinone = orotate + a quinol. It functions in the pathway pyrimidine metabolism; UMP biosynthesis via de novo pathway; orotate from (S)-dihydroorotate (quinone route): step 1/1. Catalyzes the conversion of dihydroorotate to orotate with quinone as electron acceptor. This Aliivibrio fischeri (strain MJ11) (Vibrio fischeri) protein is Dihydroorotate dehydrogenase (quinone).